Here is a 294-residue protein sequence, read N- to C-terminus: MKSFVFFAACFAIVALNSLAHAYPQKLPVPIPPPTNPPVAAFHNSVATNSKGGQDVSVKLAATNLGNKHVQPIAEVFAKGNTQGGNVLRGATVGVQGHGLGASVTKTQDGIAESFRKQAEANLRLGDSASLIGKVSQTDTKIKGIDFKPQLSSSSLALQGDRLGASISRDVNRGVSDTLTKSISANVFRNDNHNLDASVFRSDVRQNNGFNFQKTGGMLDYSHANGHGLNAGLTRFSGIGNQANVGGYSTLFRSNDGLTSLKANAGGSQWLSGPFANQRDYSFGLGLSHNAWRG.

The first 22 residues, 1–22 (MKSFVFFAACFAIVALNSLAHA), serve as a signal peptide directing secretion. The propeptide at 23-24 (YP) is removed by a dipeptidylpeptidase. Glutamine 25 bears the Pyrrolidone carboxylic acid mark. Residue arginine 293 is modified to Arginine amide.

It belongs to the attacin/sarcotoxin-2 family. As to expression, synthesized by the fat body and is eventually secreted into the hemolymph.

Its subcellular location is the secreted. Its function is as follows. Sarcotoxin II is an antibacterial protein which plays a role in the inflammatory response of this insect. The main effect of sarcotoxin II on E.coli may be the inhibition of cell wall synthesis, including septum formation. The polypeptide is Sarcotoxin II-2 (Sarcophaga peregrina (Flesh fly)).